We begin with the raw amino-acid sequence, 264 residues long: 3-methyl-2-oxobutanoate hydroxymethyltransferase (264 aa).

Mg(2+) is bound by residues Asp-45 and Asp-84. 3-methyl-2-oxobutanoate-binding positions include Asp-45–Ser-46, Asp-84, and Lys-112. A Mg(2+)-binding site is contributed by Glu-114. Residue Glu-181 is the Proton acceptor of the active site.

It belongs to the PanB family. As to quaternary structure, homodecamer; pentamer of dimers. Mg(2+) serves as cofactor.

It is found in the cytoplasm. The enzyme catalyses 3-methyl-2-oxobutanoate + (6R)-5,10-methylene-5,6,7,8-tetrahydrofolate + H2O = 2-dehydropantoate + (6S)-5,6,7,8-tetrahydrofolate. It functions in the pathway cofactor biosynthesis; (R)-pantothenate biosynthesis; (R)-pantoate from 3-methyl-2-oxobutanoate: step 1/2. In terms of biological role, catalyzes the reversible reaction in which hydroxymethyl group from 5,10-methylenetetrahydrofolate is transferred onto alpha-ketoisovalerate to form ketopantoate. This Shewanella pealeana (strain ATCC 700345 / ANG-SQ1) protein is 3-methyl-2-oxobutanoate hydroxymethyltransferase.